Here is a 78-residue protein sequence, read N- to C-terminus: MNNPERLPSETHKPITGYLWGGLAVLTCPCHLPILAVVLAGTTAGAFLGEHWVIAALGLTGLFLLSLSRALRAFRERE.

Helical transmembrane passes span 19–39 and 45–65; these read LWGG…AVVL and GAFL…LFLL.

Its subcellular location is the cell inner membrane. Its function is as follows. Broad mercury transporter that mediates the transport of both CH(3)Hg(I) and Hg(II) across the membrane. The protein is Broad mercury transporter MerE (merE) of Pseudomonas aeruginosa.